The chain runs to 696 residues: Elongation factor G (696 aa).

The 281-residue stretch at 8–288 (EDYRNFGIMA…AVVEYLPSPA (281 aa)) folds into the tr-type G domain. GTP is bound by residues 17 to 24 (AHIDAGKT), 86 to 90 (DTPGH), and 140 to 143 (NKMD).

It belongs to the TRAFAC class translation factor GTPase superfamily. Classic translation factor GTPase family. EF-G/EF-2 subfamily.

It localises to the cytoplasm. In terms of biological role, catalyzes the GTP-dependent ribosomal translocation step during translation elongation. During this step, the ribosome changes from the pre-translocational (PRE) to the post-translocational (POST) state as the newly formed A-site-bound peptidyl-tRNA and P-site-bound deacylated tRNA move to the P and E sites, respectively. Catalyzes the coordinated movement of the two tRNA molecules, the mRNA and conformational changes in the ribosome. The protein is Elongation factor G of Mesorhizobium japonicum (strain LMG 29417 / CECT 9101 / MAFF 303099) (Mesorhizobium loti (strain MAFF 303099)).